We begin with the raw amino-acid sequence, 197 residues long: NADH-quinone oxidoreductase subunit C (197 aa).

The protein belongs to the complex I 30 kDa subunit family. NDH-1 is composed of 14 different subunits. Subunits NuoB, C, D, E, F, and G constitute the peripheral sector of the complex.

Its subcellular location is the cell inner membrane. The catalysed reaction is a quinone + NADH + 5 H(+)(in) = a quinol + NAD(+) + 4 H(+)(out). In terms of biological role, NDH-1 shuttles electrons from NADH, via FMN and iron-sulfur (Fe-S) centers, to quinones in the respiratory chain. The immediate electron acceptor for the enzyme in this species is believed to be ubiquinone. Couples the redox reaction to proton translocation (for every two electrons transferred, four hydrogen ions are translocated across the cytoplasmic membrane), and thus conserves the redox energy in a proton gradient. This chain is NADH-quinone oxidoreductase subunit C, found in Rickettsia typhi (strain ATCC VR-144 / Wilmington).